A 968-amino-acid polypeptide reads, in one-letter code: AP2-associated protein kinase 1 (968 aa).

The residue at position 1 (M1) is an N-acetylmethionine. Positions 1–11 (MKKFFDSRREQ) are enriched in basic and acidic residues. A disordered region spans residues 1 to 25 (MKKFFDSRREQGGSGLGSGSSGGGG). Residues 12-25 (GGSGLGSGSSGGGG) show a composition bias toward gly residues. Residue S14 is modified to Phosphoserine. The Protein kinase domain maps to 46-315 (VTVDEVLAEG…QVSFFSFKLL (270 aa)). ATP contacts are provided by residues 52–60 (LAEGGFAIV) and K74. The active-site Proton acceptor is the D176. Y234 is subject to Phosphotyrosine. Phosphoserine is present on S235. 2 disordered regions span residues 327–485 (SPIP…AQAP) and 578–640 (IQPP…AGHR). Phosphothreonine occurs at positions 354 and 389. The residue at position 391 (R391) is an Omega-N-methylarginine. Residues 437–448 (QAPPAPQQPPSA) show a composition bias toward pro residues. Composition is skewed to low complexity over residues 449 to 472 (PAQG…LKQQ) and 578 to 589 (IQPPQAQPATAS). T613 is modified (phosphothreonine). S625 carries the post-translational modification Phosphoserine. T627 carries the phosphothreonine modification. S630, S631, S644, and S657 each carry phosphoserine. Residue T660 is modified to Phosphothreonine. The segment at 671 to 708 (SLNKSKSATTTPSGSPRASQQNVYNPSEGSTWNPFDDD) is disordered. Residues 679–703 (TTTPSGSPRASQQNVYNPSEGSTWN) show a composition bias toward polar residues. Y694 carries the phosphotyrosine modification. S738, S853, S944, and S945 each carry phosphoserine. The segment at 830-967 (EKADVAVESL…SLLLVDQLID (138 aa)) is clathrin-binding domain (CBD). Disordered regions lie at residues 843–862 (LEPP…ASNR) and 929–952 (PVLI…ESSL). Polar residues predominate over residues 851-862 (LPSQTESVASNR). A compositionally biased stretch (low complexity) spans 938–951 (GGHSRNSSGSSESS).

It belongs to the protein kinase superfamily. Ser/Thr protein kinase family. In terms of assembly, interacts (via CBD domain) with clathrin. Interacts with AP-2 complex. Interacts with NUMB. Interacts with alpha-adaptin. Interacts with EPS15. Interacts with membrane-bound activated NOTCH1 but not with the inactive full-length form of NOTCH1. Preferentially interacts with monoubiquitinated activated NOTCH1 compared to the non-ubiquitinated form. Post-translationally, autophosphorylated.

The protein localises to the cell membrane. It localises to the membrane. Its subcellular location is the clathrin-coated pit. The protein resides in the presynapse. It catalyses the reaction L-seryl-[protein] + ATP = O-phospho-L-seryl-[protein] + ADP + H(+). The catalysed reaction is L-threonyl-[protein] + ATP = O-phospho-L-threonyl-[protein] + ADP + H(+). Stimulated by clathrin. Its function is as follows. Regulates clathrin-mediated endocytosis by phosphorylating the AP2M1/mu2 subunit of the adaptor protein complex 2 (AP-2) which ensures high affinity binding of AP-2 to cargo membrane proteins during the initial stages of endocytosis. Preferentially, may phosphorylate substrates on threonine residues. Regulates phosphorylation of other AP-2 subunits as well as AP-2 localization and AP-2-mediated internalization of ligand complexes. Phosphorylates NUMB and regulates its cellular localization, promoting NUMB localization to endosomes. Binds to and stabilizes the activated form of NOTCH1, increases its localization in endosomes and regulates its transcriptional activity. In Sus scrofa (Pig), this protein is AP2-associated protein kinase 1 (AAK1).